Here is a 384-residue protein sequence, read N- to C-terminus: Sialyltransferase-like protein 3 (384 aa).

Residues 1–5 (MKRRH) lie on the Cytoplasmic side of the membrane. A helical; Signal-anchor for type II membrane protein membrane pass occupies residues 6 to 26 (WSHPSCGLLLLVAVFCLLLVF). The Lumenal segment spans residues 27-384 (RCSQLRHSGD…FRLPPVSFYR (358 aa)). The N-linked (GlcNAc...) asparagine glycan is linked to Asn-241.

This sequence belongs to the glycosyltransferase 29 family.

The protein localises to the golgi apparatus membrane. Possesses sialyltransferase-like activity in vitro. Transfers sialic acid to the glycoprotein asialofetuin. The transferred sialic acid is linked to galactose of Gal-beta-1,3-GalNAc through alpha-2,6-linkage. The protein is Sialyltransferase-like protein 3 of Oryza sativa subsp. japonica (Rice).